The primary structure comprises 179 residues: Large ribosomal subunit protein uL5 (179 aa).

Belongs to the universal ribosomal protein uL5 family. Part of the 50S ribosomal subunit; part of the 5S rRNA/L5/L18/L25 subcomplex. Contacts the 5S rRNA and the P site tRNA. Forms a bridge to the 30S subunit in the 70S ribosome.

Its function is as follows. This is one of the proteins that bind and probably mediate the attachment of the 5S RNA into the large ribosomal subunit, where it forms part of the central protuberance. In the 70S ribosome it contacts protein S13 of the 30S subunit (bridge B1b), connecting the 2 subunits; this bridge is implicated in subunit movement. Contacts the P site tRNA; the 5S rRNA and some of its associated proteins might help stabilize positioning of ribosome-bound tRNAs. The protein is Large ribosomal subunit protein uL5 of Haemophilus ducreyi (strain 35000HP / ATCC 700724).